The sequence spans 554 residues: Zinc finger protein syd-9 (554 aa).

C2H2-type zinc fingers lie at residues 20–43 (LTCPQCPKSFSSTKLLQQHQQMFH), 65–87 (FICETCGKAFRFRSNLAEHRSVH), and 93–116 (YVCKFCGKSSRLKGNLTKHILKHH). Disordered stretches follow at residues 136–158 (KIVTKDNGPTTNGSTPTTSTATP), 298–319 (SPDTVQSDHSDDFEQDSPPPMA), and 342–383 (ASGQ…CPSP). Residues 142-158 (NGPTTNGSTPTTSTATP) show a composition bias toward low complexity. 2 stretches are compositionally biased toward polar residues: residues 351–360 (PDSTDTQKGC) and 370–379 (SDPSTSSGDS). The C2H2-type 4 zinc-finger motif lies at 387 to 410 (LHCKECGTLVRKSSHLPIHMTMSH). Residues 516–554 (RMEMSLSPIKPFQQRFSRERSSSSSVERSPSRERSRSPL) are disordered. A compositionally biased stretch (basic and acidic residues) spans 544-554 (SPSRERSRSPL).

Expressed mainly in body wall muscles and ventral cord motoneurons.

The protein resides in the nucleus. It is found in the nucleus speckle. Its function is as follows. Plays a role in regulating synaptic function, probably by modulation of endocytosis. May be dispensable in muscle for normal locomotion. May be involved in post-transcriptional mRNA processing, in parallel with unc-75. This is Zinc finger protein syd-9 from Caenorhabditis elegans.